The sequence spans 851 residues: MDKYISKTPLSCYFEELVDTFISVVNSINKVDESKHHEVELILFKPPIITLTNLYNMATTTESYIEFTMLPVDKPNTKFRNRIPLSKIHGLDVKNNQLVESLDGFIWEEKSLLLKKDISDNSSAIIKYSIEEKTLFVDYKRRNASIKLELVSVVRAKLRNIVIDFKMKYFLGSGAQSANSSSLLCALNHPKNKPSLYIEFEIMMQDKNISKKKLLEELNMSASALFLSHPKYIRLCPSINPILRTHLLKKQDIININTDDLYITSKTDGIFSHVYIEKKSIFCYFSHLGYIKEYTASREIEETIYLYAEMRKEESILYLTVIKVLKPCMEDRLSELAFVKNHLTGIHDRLVFVTKCYDGPFESSSDLVVSIEEMLKTEQEGIILFYSKGEDSTTDYKVKKDNTIDQCVNVIYRYMSSEPIVFNDKGSFLEYKRYSNDKGFPKEFSTGKLDLNGSVEYINNIYCIEIKHLNPCTGITNLVLPIKFIAEFSHNDELIQPRIDKTMKYLYESGYYGNQLSVIMDHLNDQKLRIGDVFEEEKLADIAAHMKLKDSMRLNPDGNYFLSNRVRGALGILSNFVKTLLISLYCSKTYLDNHSKRKVLAIDFGNGADLEKYFYGEIALMVATDPDDNAIETGKKRYNERNAGDKSKYYKFNYIKETIRSETYVSSIRQVLYFEKFSLVDWQFAIHYSFHPKHYSTIMTNLQELTESGCKVLITTMDGDYLDTLKEKKKFIIRKLLPETENYLSIEKIDDDKVLVYNPSSMSKPMAEYIVRRDTLIRVFREYKFKLIDSCNFKTIIDRNISFINGVSRLESRGSTKNFFELNRKALEECNDTDVLELLSHYMVYVFSKEV.

Residues 1 to 544 are triphosphatase-guanylyltransferase; that stretch reads MDKYISKTPL…EEEKLADIAA (544 aa). The Mg(2+) site is built by Glu-38, Glu-40, Glu-199, and Glu-201. The N6-GMP-lysine intermediate role is filled by Lys-266. S-adenosyl-L-methionine is bound at residue 554-555; that stretch reads LN. Residues 565-850 form the mRNA cap 0 methyltransferase domain; sequence RVRGALGILS…HYMVYVFSKE (286 aa). 574–575 contributes to the mRNA binding site; that stretch reads SN. S-adenosyl-L-methionine contacts are provided by residues Lys-578, Asp-603, Asp-625, and 683 to 685; that span reads QFA.

This sequence in the N-terminal section; belongs to the dsDNA virus mRNA guanylyltransferase family. In the C-terminal section; belongs to the class I-like SAM-binding methyltransferase superfamily. mRNA cap 0 methyltransferase family. In terms of assembly, heterodimer of a catalytic and a regulatory subunit. Intrinsic methyltransferase activity of the catalytic subunit is weak and needs to be stimulated 30- to 50-fold by the regulatory subunit, which is itself catalytically inert. Requires Mg(2+) as cofactor.

It localises to the virion. It carries out the reaction a 5'-end triphospho-ribonucleoside in mRNA + H2O = a 5'-end diphospho-ribonucleoside in mRNA + phosphate + H(+). The enzyme catalyses a 5'-end diphospho-ribonucleoside in mRNA + GTP + H(+) = a 5'-end (5'-triphosphoguanosine)-ribonucleoside in mRNA + diphosphate. The catalysed reaction is a 5'-end (5'-triphosphoguanosine)-ribonucleoside in mRNA + S-adenosyl-L-methionine = a 5'-end (N(7)-methyl 5'-triphosphoguanosine)-ribonucleoside in mRNA + S-adenosyl-L-homocysteine. Catalytic subunit of the mRNA capping enzyme which catalyzes three enzymatic reactions: the 5' triphosphate end of the pre-mRNA is hydrolyzed to a diphosphate by RNA 5' triphosphatase; the diphosphate RNA end is capped with GMP by RNA guanylyltransferase and the GpppN cap is methylated by RNA (guanine-N7) methyltransferase. Heterodimeric mRNA capping enzyme catalyzes the linkage of a N7-methyl-guanosine moiety to the first transcribed nucleotide (cap 0 structure), whereas the polymerase associated VP39 is responsible for a second methylation at the 2'-O position of the ribose (cap 1 structure). Its function is as follows. The heterodimeric enzyme is also involved in early viral gene transcription termination and intermediate viral gene transcription initiation. Early gene transcription termination requires the termination factor VTF, the DNA-dependent ATPase NPH-I and the Rap94 subunit of the viral RNA polymerase, as well as the presence of a specific termination motif. Binds, together with RAP94, to the termination motif 5'-UUUUUNU-3' in the nascent early mRNA. The chain is mRNA-capping enzyme catalytic subunit from Fowlpox virus (strain NVSL) (FPV).